Consider the following 198-residue polypeptide: MERPTVVSGGTTTISIASVANGLPGRYATALYELAADRWLLNEVLPQAEALRGLIDGNADFRALLSDRTLDIKDITRALLAVLDAQGFGATIRHFVGVIARNRRLSQLPAILDALRAIAAAKRGEEVAEVVSAQPLTDLQRVQLQSRLAEAGYSRVNIQERVDAALLGGLVVRVGARLYDTSLRSRLTRLHHAMKGAA.

This sequence belongs to the ATPase delta chain family. F-type ATPases have 2 components, F(1) - the catalytic core - and F(0) - the membrane proton channel. F(1) has five subunits: alpha(3), beta(3), gamma(1), delta(1), epsilon(1). F(0) has three main subunits: a(1), b(2) and c(10-14). The alpha and beta chains form an alternating ring which encloses part of the gamma chain. F(1) is attached to F(0) by a central stalk formed by the gamma and epsilon chains, while a peripheral stalk is formed by the delta and b chains.

The protein resides in the cell inner membrane. F(1)F(0) ATP synthase produces ATP from ADP in the presence of a proton or sodium gradient. F-type ATPases consist of two structural domains, F(1) containing the extramembraneous catalytic core and F(0) containing the membrane proton channel, linked together by a central stalk and a peripheral stalk. During catalysis, ATP synthesis in the catalytic domain of F(1) is coupled via a rotary mechanism of the central stalk subunits to proton translocation. Functionally, this protein is part of the stalk that links CF(0) to CF(1). It either transmits conformational changes from CF(0) to CF(1) or is implicated in proton conduction. This Gluconacetobacter diazotrophicus (strain ATCC 49037 / DSM 5601 / CCUG 37298 / CIP 103539 / LMG 7603 / PAl5) protein is ATP synthase subunit delta.